Consider the following 289-residue polypeptide: ATP synthase mitochondrial F1 complex assembly factor 2 (289 aa).

Residues 1-40 constitute a mitochondrion transit peptide; it reads MWRIYPRLRDRWRGLLDRRLSDPTVSVWPGPAPQPPARAY. Lys-133 is modified (N6-succinyllysine).

It belongs to the ATP12 family. As to quaternary structure, interacts with ATP5F1B; involved in the assembly of the F1 component of the mitochondrial ATP synthase (ATPase). Interacts with FMC1.

It is found in the mitochondrion inner membrane. Plays a role in the assembly of the F1 component of the mitochondrial ATP synthase (ATPase). The polypeptide is ATP synthase mitochondrial F1 complex assembly factor 2 (Mus musculus (Mouse)).